The chain runs to 382 residues: Heme A synthase (382 aa).

8 consecutive transmembrane segments (helical) span residues 25 to 45, 112 to 132, 138 to 158, 176 to 196, 211 to 231, 270 to 290, 303 to 323, and 327 to 347; these read GAVR…VAVG, LLGR…WARG, LLLG…IGWI, LALH…LAAG, VVAG…GLVA, LALV…VAIA, AAAG…GLGI, and LLHV…AVLI. A heme-binding site is contributed by H277. Position 338 (H338) interacts with heme.

It belongs to the COX15/CtaA family. Type 2 subfamily. As to quaternary structure, interacts with CtaB. Heme b serves as cofactor.

Its subcellular location is the cell membrane. The catalysed reaction is Fe(II)-heme o + 2 A + H2O = Fe(II)-heme a + 2 AH2. It functions in the pathway porphyrin-containing compound metabolism; heme A biosynthesis; heme A from heme O: step 1/1. Its function is as follows. Catalyzes the conversion of heme O to heme A by two successive hydroxylations of the methyl group at C8. The first hydroxylation forms heme I, the second hydroxylation results in an unstable dihydroxymethyl group, which spontaneously dehydrates, resulting in the formyl group of heme A. The chain is Heme A synthase from Methylorubrum extorquens (strain PA1) (Methylobacterium extorquens).